Here is a 244-residue protein sequence, read N- to C-terminus: Venom nerve growth factor 2 (244 aa).

An N-terminal signal peptide occupies residues M1–A18. Positions A19–R125 are excised as a propeptide. Basic and acidic residues predominate over residues G47–D66. The interval G47 to Q67 is disordered. 3 cysteine pairs are disulfide-bonded: C139–C205, C181–C233, and C193–C235.

The protein belongs to the NGF-beta family. As to quaternary structure, homodimer; non-covalently linked. Expressed by the venom gland.

Its subcellular location is the secreted. Functionally, nerve growth factor is important for the development and maintenance of the sympathetic and sensory nervous systems. It stimulates division and differentiation of sympathetic and embryonic sensory neurons as well as basal forebrain cholinergic neurons in the brain. Its relevance in the snake venom is not clear. However, it has been shown to inhibit metalloproteinase-dependent proteolysis of platelet glycoprotein Ib alpha, suggesting a metalloproteinase inhibition to prevent metalloprotease autodigestion and/or protection against prey proteases. Binds a lipid between the two protein chains in the homodimer. The lipid-bound form promotes histamine relase from mouse mast cells, contrary to the lipid-free form. This is Venom nerve growth factor 2 from Tropidechis carinatus (Australian rough-scaled snake).